Here is a 333-residue protein sequence, read N- to C-terminus: Protein RecA (333 aa).

69–76 provides a ligand contact to ATP; it reads GPESSGKT.

The protein belongs to the RecA family.

It is found in the cytoplasm. Functionally, can catalyze the hydrolysis of ATP in the presence of single-stranded DNA, the ATP-dependent uptake of single-stranded DNA by duplex DNA, and the ATP-dependent hybridization of homologous single-stranded DNAs. It interacts with LexA causing its activation and leading to its autocatalytic cleavage. The protein is Protein RecA of Mesoplasma florum (strain ATCC 33453 / NBRC 100688 / NCTC 11704 / L1) (Acholeplasma florum).